We begin with the raw amino-acid sequence, 246 residues long: Adenylate kinase 4 (246 aa).

Position 2 is an N-acetylalanine (A2). Residue 43–48 participates in ATP binding; that stretch reads GSGKGT. An NMP region spans residues 63–92; that stretch reads STGDMLRAAVASKTPLGVKAKEAMEKGELV. AMP is bound by residues T64, R69, 90–92, 118–121, and Q125; these read ELV and GFPR. An LID region spans residues 159–196; the sequence is GRWIHPSSGRSYHTKFAPPKTPGVDDITGEPLIQRKDD. Position 160 (R160) interacts with ATP. Residues R193 and R204 each coordinate AMP.

This sequence belongs to the adenylate kinase family. In terms of assembly, monomer.

It is found in the cytoplasm. It carries out the reaction AMP + ATP = 2 ADP. Its function is as follows. Catalyzes the reversible transfer of the terminal phosphate group between ATP and AMP. Plays an important role in cellular energy homeostasis and in adenine nucleotide metabolism. This Arabidopsis thaliana (Mouse-ear cress) protein is Adenylate kinase 4 (ADK1).